Consider the following 409-residue polypeptide: F-box/kelch-repeat protein At2g44130 (409 aa).

The F-box domain maps to 17–63 (HELIPGLPSELALECLVRVPFQFQSAMRSVCRSWRSLLSDSSFIQER). 4 Kelch repeats span residues 98 to 148 (KKSE…VLQD), 151 to 199 (KILL…SVSP), 201 to 248 (KVYV…AVGM), and 251 to 300 (RFCV…RTAG).

This Arabidopsis thaliana (Mouse-ear cress) protein is F-box/kelch-repeat protein At2g44130.